The following is a 243-amino-acid chain: Glutathione S-transferase omega-2 (243 aa).

Positions 22–101 (GLIRIYSMRF…YLDDAYPGRK (80 aa)) constitute a GST N-terminal domain. Cys-32 acts as the Nucleophile in catalysis. Glutathione-binding positions include Lys-59, Ile-72, and 85-86 (ES). The GST C-terminal domain occupies 106–231 (DPYERARQKM…IFQGFLNLYF (126 aa)).

The protein belongs to the GST superfamily. Omega family. In terms of tissue distribution, expressed in a range of tissues, including the liver, kidney, skeletal muscle and prostate. Strongest expression in the testis.

The catalysed reaction is RX + glutathione = an S-substituted glutathione + a halide anion + H(+). It carries out the reaction L-dehydroascorbate + 2 glutathione = glutathione disulfide + L-ascorbate. It catalyses the reaction methylarsonate + 2 glutathione + H(+) = methylarsonous acid + glutathione disulfide + H2O. In terms of biological role, exhibits glutathione-dependent thiol transferase activity. Has high dehydroascorbate reductase activity and may contribute to the recycling of ascorbic acid. Participates in the biotransformation of inorganic arsenic and reduces monomethylarsonic acid (MMA). This is Glutathione S-transferase omega-2 (GSTO2) from Homo sapiens (Human).